The following is a 403-amino-acid chain: Acetate kinase (403 aa).

Position 7 (asparagine 7) interacts with Mg(2+). Position 14 (lysine 14) interacts with ATP. Arginine 90 serves as a coordination point for substrate. Aspartate 147 serves as the catalytic Proton donor/acceptor. Residues 207 to 211 (HIGNG), 283 to 285 (DMR), and 331 to 335 (GVGEN) contribute to the ATP site. Glutamate 386 serves as a coordination point for Mg(2+).

It belongs to the acetokinase family. In terms of assembly, homodimer. It depends on Mg(2+) as a cofactor. Requires Mn(2+) as cofactor.

The protein resides in the cytoplasm. The catalysed reaction is acetate + ATP = acetyl phosphate + ADP. Its pathway is metabolic intermediate biosynthesis; acetyl-CoA biosynthesis; acetyl-CoA from acetate: step 1/2. Its function is as follows. Catalyzes the formation of acetyl phosphate from acetate and ATP. Can also catalyze the reverse reaction. The sequence is that of Acetate kinase from Thermotoga petrophila (strain ATCC BAA-488 / DSM 13995 / JCM 10881 / RKU-1).